The primary structure comprises 379 residues: Pentatricopeptide repeat-containing protein At3g25210, mitochondrial (379 aa).

PPR repeat units lie at residues 142-177, 179-221, 222-256, 257-291, 292-326, and 327-361; these read SVPL…DDSK, DLET…GVIP, DTFV…GSEP, NAYT…GMVP, NGSC…SLSP, and DMLT…DPVM.

The protein belongs to the PPR family. P subfamily.

Its subcellular location is the mitochondrion. This chain is Pentatricopeptide repeat-containing protein At3g25210, mitochondrial, found in Arabidopsis thaliana (Mouse-ear cress).